A 312-amino-acid chain; its full sequence is Malate dehydrogenase (312 aa).

NAD(+)-binding positions include 7-13 and Asp-34; that span reads GAAGGIG. Substrate-binding residues include Arg-81 and Arg-87. NAD(+) contacts are provided by residues Asn-94 and 117 to 119; that span reads ITN. Residues Asn-119 and Arg-153 each contribute to the substrate site. His-177 (proton acceptor) is an active-site residue. Met-227 is a binding site for NAD(+).

The protein belongs to the LDH/MDH superfamily. MDH type 1 family. In terms of assembly, homodimer.

The enzyme catalyses (S)-malate + NAD(+) = oxaloacetate + NADH + H(+). Catalyzes the reversible oxidation of malate to oxaloacetate. The protein is Malate dehydrogenase of Escherichia coli (strain ATCC 8739 / DSM 1576 / NBRC 3972 / NCIMB 8545 / WDCM 00012 / Crooks).